Consider the following 569-residue polypeptide: MASMALSLTSSPTYSLSFRSLPSLKPLSKSQPSISLPSLRSNASKSPSLSHKHFLSPPSLLLPHKLKPISASSPTNPPPPPAPVPSPAPVSAPAQVQPWQGASIKPLLASILTGVIIWFIPTPEGVSRNAWQLLAIFLSTIVGIITQPLPLGAVALMGLGASVLTKTLTFSAAFSAFGDPIPWLIALAFFFARGFIKTGLGNRIAYQFVKLFGSSSLGLGYSLVFSEALLAPAIPSVSARAGGIFLPLVKSLCIACGSNVGDGTERKLGAWLMLTCFQTSVISSSMFLTAMAANPLSATLTFNTIGKAIGWMDWAKAAFVPGLVSLIVVPLLLYVVYPPEIKSSPDAPRLAKEKLDKMGPMTKNESIMAVTLLLTVGLWVFGGKLGVDAVTAAILGLSVLLITGVVTWKECLAESVAWDTLTWFAALIAMAGYLNKYGLITWFSENVVKVVGGLGLSWQMSFGVLVLLYFYSHYFFASGAAHIGAMFTAFLSVASALGTPPFLAAIVLSFLSNLMGGLTHYGIGSAPVFYGANYVPLPQWWGYGFLISIVNLIIWLGVGGLWWKAIGLW.

Residues Met-1–Pro-93 constitute a chloroplast transit peptide. A compositionally biased stretch (low complexity) spans Ser-23–Pro-74. Residues Ser-23 to Pro-93 are disordered. Residues Thr-75–Val-90 show a composition bias toward pro residues. 12 consecutive transmembrane segments (helical) span residues Pro-106–Val-126, Leu-134–Val-154, Ala-172–Ala-192, Ala-241–Gly-261, Leu-268–Leu-288, Ala-317–Tyr-337, Ile-367–Val-387, Asp-388–Trp-408, Trp-423–Phe-443, Val-450–Phe-470, Phe-490–Phe-510, and Tyr-543–Trp-563.

Belongs to the SLC13A/DASS transporter (TC 2.A.47) family. DIT1 subfamily. As to quaternary structure, monomer. The N-terminus is blocked. In terms of tissue distribution, expressed in leaves.

The protein localises to the plastid. It is found in the chloroplast inner membrane. 2-oxoglutarate/malate translocator that transports carbon skeletons into chloroplasts for net glutamate synthesis. This translocator exchanges malate for internal succinate, fumarate and 2-oxoglutarate but not for aspartate and glutamate. Involved with DIT2 in primary ammonia assimilation and in the re-assimilation of ammonia generated by the photorespiratory pathway. Imports 2-oxoglutarate into plastids as precursor for ammonia assimilation. 2-oxoglutarate is converted to glutamate, the end product of ammonia assimilation, which is exported to the cytosol by DIT2. The sequence is that of Dicarboxylate transporter 1, chloroplastic (DIT1) from Spinacia oleracea (Spinach).